A 201-amino-acid chain; its full sequence is Retinol-binding protein 4 (201 aa).

A signal peptide spans 1–18 (MKWVWALLLLAALGSGRA). 3 disulfides stabilise this stretch: cysteine 22–cysteine 178, cysteine 88–cysteine 192, and cysteine 138–cysteine 147. Glutamine 116 provides a ligand contact to substrate. Arginine 139 bears the Omega-N-methylarginine mark.

This sequence belongs to the calycin superfamily. Lipocalin family. Interacts with TTR. Interaction with TTR prevents its loss by filtration through the kidney glomeruli. Interacts with STRA6. In terms of tissue distribution, detected in blood plasma and in urine (at protein level).

Its subcellular location is the secreted. Retinol-binding protein that mediates retinol transport in blood plasma. Delivers retinol from the liver stores to the peripheral tissues. Transfers the bound all-trans retinol to STRA6, that then facilitates retinol transport across the cell membrane. This chain is Retinol-binding protein 4 (RBP4), found in Homo sapiens (Human).